A 487-amino-acid chain; its full sequence is N-succinylglutamate 5-semialdehyde dehydrogenase (487 aa).

221–226 contacts NAD(+); the sequence is GSSDTG. Catalysis depends on residues Glu244 and Cys278.

The protein belongs to the aldehyde dehydrogenase family. AstD subfamily.

It catalyses the reaction N-succinyl-L-glutamate 5-semialdehyde + NAD(+) + H2O = N-succinyl-L-glutamate + NADH + 2 H(+). It functions in the pathway amino-acid degradation; L-arginine degradation via AST pathway; L-glutamate and succinate from L-arginine: step 4/5. In terms of biological role, catalyzes the NAD-dependent reduction of succinylglutamate semialdehyde into succinylglutamate. In Burkholderia cenocepacia (strain HI2424), this protein is N-succinylglutamate 5-semialdehyde dehydrogenase.